Here is a 128-residue protein sequence, read N- to C-terminus: Fluoride-specific ion channel FluC (128 aa).

Helical transmembrane passes span 7-27, 37-57, 73-93, and 96-116; these read LAIG…AGLV, FGTL…IGAI, TGMM…FFLF, and ALYI…IILA. Na(+) contacts are provided by Gly-77 and Thr-80.

This sequence belongs to the fluoride channel Fluc/FEX (TC 1.A.43) family.

It localises to the cell inner membrane. It catalyses the reaction fluoride(in) = fluoride(out). Na(+) is not transported, but it plays an essential structural role and its presence is essential for fluoride channel function. Its function is as follows. Fluoride-specific ion channel. Important for reducing fluoride concentration in the cell, thus reducing its toxicity. In Nautilia profundicola (strain ATCC BAA-1463 / DSM 18972 / AmH), this protein is Fluoride-specific ion channel FluC.